We begin with the raw amino-acid sequence, 192 residues long: NADH-quinone oxidoreductase subunit B (192 aa).

Cysteine 71, cysteine 72, cysteine 136, and cysteine 166 together coordinate [4Fe-4S] cluster.

Belongs to the complex I 20 kDa subunit family. As to quaternary structure, NDH-1 is composed of 14 different subunits. Subunits NuoB, C, D, E, F, and G constitute the peripheral sector of the complex. The cofactor is [4Fe-4S] cluster.

Its subcellular location is the cell inner membrane. The catalysed reaction is a quinone + NADH + 5 H(+)(in) = a quinol + NAD(+) + 4 H(+)(out). Functionally, NDH-1 shuttles electrons from NADH, via FMN and iron-sulfur (Fe-S) centers, to quinones in the respiratory chain. Couples the redox reaction to proton translocation (for every two electrons transferred, four hydrogen ions are translocated across the cytoplasmic membrane), and thus conserves the redox energy in a proton gradient. This chain is NADH-quinone oxidoreductase subunit B, found in Azorhizobium caulinodans (strain ATCC 43989 / DSM 5975 / JCM 20966 / LMG 6465 / NBRC 14845 / NCIMB 13405 / ORS 571).